The primary structure comprises 663 residues: UvrABC system protein B (663 aa).

One can recognise a Helicase ATP-binding domain in the interval 31-418 (DNIEGGEKAQ…TDTVVEQIIR (388 aa)). 44-51 (GATGTGKT) is a binding site for ATP. Residues 97–120 (YYDYYQPEAYVPSSDTYIEKDSSV) carry the Beta-hairpin motif. The 167-residue stretch at 435–601 (QMDDLLGEIN…TIKKEIRDLI (167 aa)) folds into the Helicase C-terminal domain. The region spanning 627–662 (QAEIKALQQQMQEAAELLDFELAAQIRDVILELKAI) is the UVR domain.

This sequence belongs to the UvrB family. In terms of assembly, forms a heterotetramer with UvrA during the search for lesions. Interacts with UvrC in an incision complex.

It localises to the cytoplasm. In terms of biological role, the UvrABC repair system catalyzes the recognition and processing of DNA lesions. A damage recognition complex composed of 2 UvrA and 2 UvrB subunits scans DNA for abnormalities. Upon binding of the UvrA(2)B(2) complex to a putative damaged site, the DNA wraps around one UvrB monomer. DNA wrap is dependent on ATP binding by UvrB and probably causes local melting of the DNA helix, facilitating insertion of UvrB beta-hairpin between the DNA strands. Then UvrB probes one DNA strand for the presence of a lesion. If a lesion is found the UvrA subunits dissociate and the UvrB-DNA preincision complex is formed. This complex is subsequently bound by UvrC and the second UvrB is released. If no lesion is found, the DNA wraps around the other UvrB subunit that will check the other stand for damage. In Streptococcus agalactiae serotype III (strain NEM316), this protein is UvrABC system protein B.